Here is a 321-residue protein sequence, read N- to C-terminus: Thylakoid-associated protein sll1697 (321 aa).

The protein localises to the cellular thylakoid membrane. The protein is Thylakoid-associated protein sll1697 of Synechocystis sp. (strain ATCC 27184 / PCC 6803 / Kazusa).